The chain runs to 430 residues: Adenylosuccinate synthetase (430 aa).

GTP is bound by residues Gly-12–Lys-18 and Gly-40–Thr-42. Asp-13 serves as the catalytic Proton acceptor. Mg(2+) contacts are provided by Asp-13 and Gly-40. IMP is bound by residues Asp-13 to Lys-16, Asn-38 to His-41, Thr-128, Arg-142, Gln-223, Thr-238, and Arg-302. The active-site Proton donor is His-41. Thr-298 to Arg-304 is a binding site for substrate. Residues Arg-304, Ser-330–Asp-332, and Ser-412–Gly-414 each bind GTP.

This sequence belongs to the adenylosuccinate synthetase family. As to quaternary structure, homodimer. The cofactor is Mg(2+).

Its subcellular location is the cytoplasm. It catalyses the reaction IMP + L-aspartate + GTP = N(6)-(1,2-dicarboxyethyl)-AMP + GDP + phosphate + 2 H(+). The protein operates within purine metabolism; AMP biosynthesis via de novo pathway; AMP from IMP: step 1/2. Plays an important role in the de novo pathway of purine nucleotide biosynthesis. Catalyzes the first committed step in the biosynthesis of AMP from IMP. The protein is Adenylosuccinate synthetase of Streptococcus equi subsp. equi (strain 4047).